The primary structure comprises 122 residues: Large ribosomal subunit protein uL18 (122 aa).

Residues 1-19 (MSTLSRKQKTQKRHKRLRR) show a composition bias toward basic residues. The tract at residues 1–26 (MSTLSRKQKTQKRHKRLRRNLSGTDQ) is disordered.

The protein belongs to the universal ribosomal protein uL18 family. As to quaternary structure, part of the 50S ribosomal subunit; part of the 5S rRNA/L5/L18/L25 subcomplex. Contacts the 5S and 23S rRNAs.

Its function is as follows. This is one of the proteins that bind and probably mediate the attachment of the 5S RNA into the large ribosomal subunit, where it forms part of the central protuberance. The chain is Large ribosomal subunit protein uL18 from Prochlorococcus marinus (strain SARG / CCMP1375 / SS120).